The following is a 309-amino-acid chain: HPr kinase/phosphorylase (309 aa).

Catalysis depends on residues His-138 and Lys-159. An ATP-binding site is contributed by 153–160 (GDSGIGKS). Ser-160 lines the Mg(2+) pocket. Asp-177 acts as the Proton acceptor; for phosphorylation activity. Proton donor; for dephosphorylation activity in catalysis. Residues 201 to 210 (LEIRGVGIID) form an important for the catalytic mechanism of both phosphorylation and dephosphorylation region. Glu-202 contacts Mg(2+). Arg-243 is an active-site residue. The interval 264–269 (PVKTGR) is important for the catalytic mechanism of dephosphorylation.

This sequence belongs to the HPrK/P family. As to quaternary structure, homohexamer. Mg(2+) is required as a cofactor.

It carries out the reaction [HPr protein]-L-serine + ATP = [HPr protein]-O-phospho-L-serine + ADP + H(+). The catalysed reaction is [HPr protein]-O-phospho-L-serine + phosphate + H(+) = [HPr protein]-L-serine + diphosphate. Its function is as follows. Catalyzes the ATP- as well as the pyrophosphate-dependent phosphorylation of a specific serine residue in HPr, a phosphocarrier protein of the phosphoenolpyruvate-dependent sugar phosphotransferase system (PTS). HprK/P also catalyzes the pyrophosphate-producing, inorganic phosphate-dependent dephosphorylation (phosphorolysis) of seryl-phosphorylated HPr (P-Ser-HPr). The two antagonistic activities of HprK/P are regulated by several intracellular metabolites, which change their concentration in response to the absence or presence of rapidly metabolisable carbon sources (glucose, fructose, etc.) in the growth medium. Therefore, by controlling the phosphorylation state of HPr, HPrK/P is a sensor enzyme that plays a major role in the regulation of carbon metabolism and sugar transport: it mediates carbon catabolite repression (CCR), and regulates PTS-catalyzed carbohydrate uptake and inducer exclusion. The sequence is that of HPr kinase/phosphorylase from Streptococcus thermophilus (strain ATCC BAA-491 / LMD-9).